Here is a 511-residue protein sequence, read N- to C-terminus: T-complex protein 1 subunit eta (511 aa).

This sequence belongs to the TCP-1 chaperonin family. As to quaternary structure, component of the T-complex protein 1 (TCP1) complex.

Its subcellular location is the cytoplasm. In terms of biological role, molecular chaperone; assists the folding of proteins upon ATP hydrolysis. This Encephalitozoon cuniculi (strain GB-M1) (Microsporidian parasite) protein is T-complex protein 1 subunit eta (CCT7).